A 241-amino-acid chain; its full sequence is Deoxynucleotide monophosphate kinase (241 aa).

Position 10 (Lys10) interacts with dGMP. The ATP site is built by Arg11, Gly13, Asp15, and Thr16. Residues Ile36 and Lys37 each coordinate dGMP. Tyr42 is a binding site for Mg(2+). Arg68 serves as a coordination point for dGMP. Mg(2+) contacts are provided by Gln85 and Glu108. Residues Arg132, Gly139, Thr140, Val144, Trp152, Asp175, Arg177, Gln178, Glu181, and Thr208 each contribute to the dGMP site.

It belongs to the dNMP kinase family. Homodimer. Mg(2+) is required as a cofactor.

The catalysed reaction is dTMP + ATP = dTDP + ADP. The enzyme catalyses dGMP + ATP = dGDP + ADP. It carries out the reaction 5-hydroxymethyl-dCMP + ATP = 5-hydroxymethyl-dCDP + ADP. Its activity is regulated as follows. Inhibited by pyridoxal 5'-phosphate and diethylpyrocarbonate. Functionally, allows the synthesis of deoxyribonucleoside triphosphates necessary for the rapid viral DNA replication. Phosphorylates dGMP, dTMP and 5-hydroxymethyl-dCMP (hmdCMP) while excluding dCMP and dAMP. The phosphorylation of 5-hydroxymethyl-dCMP represents the first step in the replacement of cytosine by hydroxymethylcytosine in new viral DNA genomes. The polypeptide is Deoxynucleotide monophosphate kinase (1) (Enterobacteria phage T4 (Bacteriophage T4)).